We begin with the raw amino-acid sequence, 835 residues long: Protein P (835 aa).

The segment at 1–176 (MPLSYQHFRK…FFGTPYTWEH (176 aa)) is terminal protein domain (TP). The interval 177–334 (KLQHGTQPVN…HCLHHIVKLL (158 aa)) is spacer. 2 disordered regions span residues 211–235 (LGQK…WSRT) and 258–288 (RHPS…PTSH). The segment at 335-680 (DDWGPCQHHG…YMHLYPVARQ (346 aa)) is polymerase/reverse transcriptase domain (RT). Positions 345–590 (HHFIRIPRTP…KALNFMGYVI (246 aa)) constitute a Reverse transcriptase domain. Residues Asp-417, Asp-541, and Asp-542 each contribute to the Mg(2+) site.

The protein belongs to the hepadnaviridae P protein family.

It catalyses the reaction DNA(n) + a 2'-deoxyribonucleoside 5'-triphosphate = DNA(n+1) + diphosphate. It carries out the reaction Endonucleolytic cleavage to 5'-phosphomonoester.. Activated by host HSP70 and HSP40 in vitro to be able to bind the epsilon loop of the pgRNA. Because deletion of the RNase H region renders the protein partly chaperone-independent, the chaperones may be needed indirectly to relieve occlusion of the RNA-binding site by this domain. Inhibited by several reverse-transcriptase inhibitors: Lamivudine, Adefovir and Entecavir. In terms of biological role, multifunctional enzyme that converts the viral RNA genome into dsDNA in viral cytoplasmic capsids. This enzyme displays a DNA polymerase activity that can copy either DNA or RNA templates, and a ribonuclease H (RNase H) activity that cleaves the RNA strand of RNA-DNA heteroduplexes in a partially processive 3'- to 5'-endonucleasic mode. Neo-synthesized pregenomic RNA (pgRNA) are encapsidated together with the P protein, and reverse-transcribed inside the nucleocapsid. Initiation of reverse-transcription occurs first by binding the epsilon loop on the pgRNA genome, and is initiated by protein priming, thereby the 5'-end of (-)DNA is covalently linked to P protein. Partial (+)DNA is synthesized from the (-)DNA template and generates the relaxed circular DNA (RC-DNA) genome. After budding and infection, the RC-DNA migrates in the nucleus, and is converted into a plasmid-like covalently closed circular DNA (cccDNA). The activity of P protein does not seem to be necessary for cccDNA generation, and is presumably released from (+)DNA by host nuclear DNA repair machinery. This chain is Protein P, found in Woolly monkey hepatitis B virus (isolate Louisville) (WMHBV).